A 293-amino-acid chain; its full sequence is MNHLLSMEHLSTDQIYKLIQKASQFKSGERQLPNFEGKYVANLFFENSTRTKCSFEMAELKLGLKTISFETSTSSVSKGESLYDTCKTLESIGCDLLVIRHPFNNYYEKLANINIPIANAGDGSGQHPTQSLLDLMTIYEEYGYFEGLNVLICGDIKNSRVARSNYHSLKALGANVMFNSPNAWIDDSLEAPYVNIDDVIETVDIVMLLRIQHERHGLAEETRFAADDYHQKHGLNEVRYNKLQEHAIVMHPAPVNRGVEIQSDLVEASKSRIFKQMENGVYLRMAVIDELLK.

Carbamoyl phosphate is bound by residues Arg50 and Thr51. Lys78 is a binding site for L-aspartate. Carbamoyl phosphate is bound by residues Arg100, His127, and Gln130. L-aspartate-binding residues include Arg160 and Arg210. 2 residues coordinate carbamoyl phosphate: Ala253 and Pro254.

Belongs to the aspartate/ornithine carbamoyltransferase superfamily. ATCase family. As to quaternary structure, heterododecamer (2C3:3R2) of six catalytic PyrB chains organized as two trimers (C3), and six regulatory PyrI chains organized as three dimers (R2).

It carries out the reaction carbamoyl phosphate + L-aspartate = N-carbamoyl-L-aspartate + phosphate + H(+). It functions in the pathway pyrimidine metabolism; UMP biosynthesis via de novo pathway; (S)-dihydroorotate from bicarbonate: step 2/3. Functionally, catalyzes the condensation of carbamoyl phosphate and aspartate to form carbamoyl aspartate and inorganic phosphate, the committed step in the de novo pyrimidine nucleotide biosynthesis pathway. This is Aspartate carbamoyltransferase catalytic subunit from Staphylococcus aureus (strain USA300).